We begin with the raw amino-acid sequence, 906 residues long: Coatomer subunit beta' (906 aa).

WD repeat units lie at residues 13–52 (ARSD…LVKT), 55–94 (VCDL…RVHM), 97–136 (AHSD…SCSQ), 140–180 (GHTH…PNFT), 183–224 (GHEK…CVQT), 227–266 (GHAQ…LEST), 350–388 (SCEI…NKSF), and 390–425 (SAQE…KSFK). Residue lysine 627 is modified to N6-acetyllysine. Residues 746–783 (IRTGRLPEAAFLARTYLPSQVSRVVKLWRENLSKVNQK) form a WD 9 repeat. The tract at residues 837–863 (EEAKGFQPSRSTAQQELDGKPASPTPV) is disordered. Residue serine 859 is modified to Phosphoserine. Threonine 861 carries the post-translational modification Phosphothreonine. The stretch at 866 to 890 (ASHTANKEEKSLLELEVDLDNLELV) forms a coiled coil.

It belongs to the WD repeat COPB2 family. As to quaternary structure, oligomeric complex that consists of at least the alpha, beta, beta', gamma, delta, epsilon and zeta subunits. Probably interacts with PEX11A. Interacts with SCYL1. Interacts with JAGN1.

It is found in the cytoplasm. The protein resides in the cytosol. It localises to the golgi apparatus membrane. The protein localises to the cytoplasmic vesicle. Its subcellular location is the COPI-coated vesicle membrane. Functionally, the coatomer is a cytosolic protein complex that binds to dilysine motifs and reversibly associates with Golgi non-clathrin-coated vesicles, which further mediate biosynthetic protein transport from the ER, via the Golgi up to the trans Golgi network. Coatomer complex is required for budding from Golgi membranes, and is essential for the retrograde Golgi-to-ER transport of dilysine-tagged proteins. In mammals, the coatomer can only be recruited by membranes associated to ADP-ribosylation factors (ARFs), which are small GTP-binding proteins; the complex also influences the Golgi structural integrity, as well as the processing, activity, and endocytic recycling of LDL receptors. Its function is as follows. This coatomer complex protein, essential for Golgi budding and vesicular trafficking, is a selective binding protein (RACK) for protein kinase C, epsilon type. It binds to Golgi membranes in a GTP-dependent manner. In Pongo abelii (Sumatran orangutan), this protein is Coatomer subunit beta' (COPB2).